The chain runs to 235 residues: Probable ribonuclease P protein subunit 3 (235 aa).

The protein belongs to the eukaryotic/archaeal RNase P protein component 3 family.

It localises to the nucleus. The catalysed reaction is Endonucleolytic cleavage of RNA, removing 5'-extranucleotides from tRNA precursor.. Functionally, part of ribonuclease P, a protein complex that generates mature tRNA molecules by cleaving their 5'-ends. In Schizosaccharomyces pombe (strain 972 / ATCC 24843) (Fission yeast), this protein is Probable ribonuclease P protein subunit 3.